We begin with the raw amino-acid sequence, 638 residues long: Trichohyalin-like protein 1 (638 aa).

The EF-hand domain occupies 49–84 (HVFHAVERKLNLLNFDRDGTISFEEFVLAIFSLLNP). A disordered region spans residues 134 to 638 (SEMASSGQPS…ALEAESLEAQ (505 aa)). Over residues 166–179 (LPRNVSEPNDPENQ) the composition is skewed to polar residues. Basic and acidic residues-rich tracts occupy residues 221 to 246 (IPRE…QRPT), 294 to 309 (DDTK…KDAG), and 318 to 328 (EEPKADAKVAE). Polar residues predominate over residues 343-357 (DQSVQSRSRNVSETS). Composition is skewed to basic and acidic residues over residues 358 to 372 (SRGE…HERI), 395 to 409 (REND…KDPS), 419 to 435 (EIKE…HSEE), 479 to 490 (RIQDKPVRKEDH), 526 to 548 (AEPH…KQES), and 622 to 631 (AGRENRKALE).

This sequence belongs to the S-100 family.

The polypeptide is Trichohyalin-like protein 1 (Tchhl1) (Mus musculus (Mouse)).